The following is a 374-amino-acid chain: MGLMDTRWETIVPFIVMALMEACTIALTILAKTALTGGMSPFVFIVYTNALGSLLLLPYSFYFHRDESDDEPFLTKPSLVRIFLLGFTGVFLFQNMAFLGLSYSSPIVVCAMGLQSPAFSFLLSLALGKEGGLGWASKRTKGRVIGTLICFTGAFVEVIYLGPFIRPSPPSSPTSNFLTTISHYLTFFKNSDNWALGSLLLACATLSISIWNIIQLDTVQKYPQVMKVVSAYSLAGTLQCAIFSAFMEPDLSAWELKLNMDLYLIIATGIFGSIIRTSVQVKCSKMKGPYYVPLFKPFGILWASIFGTSFFVNSLHYGSVLGAAIAGTGYLLIMWSQVQKDDPNETVEKNDNHQLDSDEQTTPLLLANGDFDQV.

10 helical membrane passes run 11–31 (IVPF…TILA), 42–62 (FVFI…YSFY), 82–102 (IFLL…LGLS), 107–127 (IVVC…SLAL), 145–165 (IGTL…GPFI), 194–214 (WALG…WNII), 228–248 (VVSA…AFME), 255–275 (ELKL…GSII), 292–312 (VPLF…SFFV), and 315–335 (LHYG…LIMW). An EamA domain is found at 26 to 155 (ALTILAKTAL…GTLICFTGAF (130 aa)).

It belongs to the drug/metabolite transporter (DMT) superfamily. Plant drug/metabolite exporter (P-DME) (TC 2.A.7.4) family.

The protein resides in the membrane. The chain is WAT1-related protein At1g60050 from Arabidopsis thaliana (Mouse-ear cress).